A 541-amino-acid chain; its full sequence is Reticulophagy regulator 2 (541 aa).

A run of 3 helical transmembrane segments spans residues 75-91, 99-115, and 199-219; these read LHSL…FWLL, FFLL…LDLW, and VPGI…PLVV. Residues 249 to 282 form a disordered region; sequence LHHKHDKRKRQGKNAPPAGDEPLAETESESEAEL. Over residues 250–260 the composition is skewed to basic residues; the sequence is HHKHDKRKRQG. The span at 270-280 shows a compositional bias: acidic residues; sequence PLAETESESEA. Thr274 is modified (phosphothreonine). Phosphoserine is present on residues Ser276, Ser278, Ser286, and Ser306. At Thr329 the chain carries Phosphothreonine. Disordered stretches follow at residues 331–389, 403–440, and 459–481; these read VSED…ADKE, THFN…APSS, and PSVL…EEEA. 3 positions are modified to phosphoserine: Ser332, Ser339, and Ser342. Positions 459–475 are enriched in low complexity; that stretch reads PSVLPSLPQDSPQALTA. Positions 485-490 match the LIR motif motif; that stretch reads EDFELL. The segment at 496–541 is disordered; sequence EQLNAELGLGPEMPPKPPDVLPPPPLGPDSHSLVQSDQEAHAVVEP. The segment covering 507 to 522 has biased composition (pro residues); it reads EMPPKPPDVLPPPPLG.

The protein belongs to the RETREG family. Interacts with ATG8 family modifier proteins MAP1LC3A, MAP1LC3B, GABARAP, GABARAPL1 and GABARAPL2. Interacts with CANX.

Its subcellular location is the endoplasmic reticulum membrane. Functionally, endoplasmic reticulum (ER)-anchored autophagy regulator which exists in an inactive state under basal conditions but is activated following cellular stress. When activated, induces ER fragmentation and mediates ER delivery into lysosomes through sequestration into autophagosomes via interaction with ATG8 family proteins. Required for collagen quality control in a LIR motif-independent manner. In Rattus norvegicus (Rat), this protein is Reticulophagy regulator 2 (Retreg2).